The chain runs to 649 residues: Probable ADP-ribosylation factor GTPase-activating protein AGD14 (649 aa).

One can recognise an Arf-GAP domain in the interval 12–130; the sequence is EKIIRGLMKL…KYAGANDADK (119 aa). The C4-type zinc-finger motif lies at 27–50; the sequence is CINCNSLGPQYVCTTFWTFVCMAC. Disordered stretches follow at residues 124-159, 209-279, 294-316, and 366-391; these read GAND…QSPP, FSNE…VRSV, LGEA…SNHV, and FTPA…SAPK. Basic and acidic residues predominate over residues 127–146; sequence DADKPSKDSQDHVSSEDMTR. Over residues 150–159 the composition is skewed to low complexity; it reads SYHSYSQSPP. Composition is skewed to polar residues over residues 248-257, 269-279, 300-315, and 366-385; these read PQFQHSNAPP, RTTSSGSVRSV, ESRQ…TSNH, and FTPA…SRPS.

Its function is as follows. GTPase-activating protein (GAP) for ADP ribosylation factor (ARF). The chain is Probable ADP-ribosylation factor GTPase-activating protein AGD14 (AGD14) from Arabidopsis thaliana (Mouse-ear cress).